The primary structure comprises 46 residues: LVCFVVVVFMAAAAAMAGADRELKYLSHGGVDFPVPAGRLDGVVSR.

Belongs to the peroxidase family. Classical plant (class III) peroxidase subfamily. Heme b is required as a cofactor. Requires Ca(2+) as cofactor.

It is found in the secreted. It catalyses the reaction 2 a phenolic donor + H2O2 = 2 a phenolic radical donor + 2 H2O. Its function is as follows. Removal of H(2)O(2), oxidation of toxic reductants, biosynthesis and degradation of lignin, suberization, auxin catabolism, response to environmental stresses such as wounding, pathogen attack and oxidative stress. These functions might be dependent on each isozyme/isoform in each plant tissue. This Catharanthus roseus (Madagascar periwinkle) protein is Peroxidase 1.